Consider the following 240-residue polypeptide: Large ribosomal subunit protein uL3 (240 aa).

Disordered regions lie at residues V139–G164 and D215–V240. Q151 carries the post-translational modification N5-methylglutamine. Over residues A225–V240 the composition is skewed to low complexity.

It belongs to the universal ribosomal protein uL3 family. As to quaternary structure, part of the 50S ribosomal subunit. Forms a cluster with proteins L14 and L19. Methylated by PrmB.

Its function is as follows. One of the primary rRNA binding proteins, it binds directly near the 3'-end of the 23S rRNA, where it nucleates assembly of the 50S subunit. This Rhodopseudomonas palustris (strain BisA53) protein is Large ribosomal subunit protein uL3.